Consider the following 215-residue polypeptide: ATP-dependent dethiobiotin synthetase BioD (215 aa).

Residue 13-18 (DIGKTV) participates in ATP binding. Residue threonine 17 coordinates Mg(2+). Lysine 38 is an active-site residue. Threonine 42 contributes to the substrate binding site. ATP is bound by residues aspartate 50, 115–118 (EGAG), and 175–176 (NH). 2 residues coordinate Mg(2+): aspartate 50 and glutamate 115.

Belongs to the dethiobiotin synthetase family. As to quaternary structure, homodimer. Mg(2+) serves as cofactor.

The protein resides in the cytoplasm. It carries out the reaction (7R,8S)-7,8-diammoniononanoate + CO2 + ATP = (4R,5S)-dethiobiotin + ADP + phosphate + 3 H(+). Its pathway is cofactor biosynthesis; biotin biosynthesis; biotin from 7,8-diaminononanoate: step 1/2. In terms of biological role, catalyzes a mechanistically unusual reaction, the ATP-dependent insertion of CO2 between the N7 and N8 nitrogen atoms of 7,8-diaminopelargonic acid (DAPA, also called 7,8-diammoniononanoate) to form a ureido ring. In Neisseria gonorrhoeae (strain NCCP11945), this protein is ATP-dependent dethiobiotin synthetase BioD.